Here is a 209-residue protein sequence, read N- to C-terminus: Ribosomal RNA large subunit methyltransferase E (209 aa).

The S-adenosyl-L-methionine site is built by G63, W65, D83, D99, and D124. The active-site Proton acceptor is the K164.

Belongs to the class I-like SAM-binding methyltransferase superfamily. RNA methyltransferase RlmE family.

It is found in the cytoplasm. The enzyme catalyses uridine(2552) in 23S rRNA + S-adenosyl-L-methionine = 2'-O-methyluridine(2552) in 23S rRNA + S-adenosyl-L-homocysteine + H(+). In terms of biological role, specifically methylates the uridine in position 2552 of 23S rRNA at the 2'-O position of the ribose in the fully assembled 50S ribosomal subunit. This is Ribosomal RNA large subunit methyltransferase E from Vibrio campbellii (strain ATCC BAA-1116).